The chain runs to 252 residues: Triosephosphate isomerase (252 aa).

Position 10 to 12 (10 to 12 (NWK)) interacts with substrate. His96 (electrophile) is an active-site residue. The Proton acceptor role is filled by Glu168. Substrate-binding positions include Gly174, Ser214, and 235 to 236 (GG).

Belongs to the triosephosphate isomerase family. In terms of assembly, homodimer.

Its subcellular location is the cytoplasm. The enzyme catalyses D-glyceraldehyde 3-phosphate = dihydroxyacetone phosphate. It participates in carbohydrate biosynthesis; gluconeogenesis. It functions in the pathway carbohydrate degradation; glycolysis; D-glyceraldehyde 3-phosphate from glycerone phosphate: step 1/1. Functionally, involved in the gluconeogenesis. Catalyzes stereospecifically the conversion of dihydroxyacetone phosphate (DHAP) to D-glyceraldehyde-3-phosphate (G3P). The chain is Triosephosphate isomerase from Streptococcus pyogenes serotype M6 (strain ATCC BAA-946 / MGAS10394).